A 169-amino-acid chain; its full sequence is uncharacterized protein (169 aa).

This is an uncharacterized protein from Methanocaldococcus jannaschii (strain ATCC 43067 / DSM 2661 / JAL-1 / JCM 10045 / NBRC 100440) (Methanococcus jannaschii).